The following is a 273-amino-acid chain: 4-hydroxy-tetrahydrodipicolinate reductase (273 aa).

NAD(+) contacts are provided by residues 12-17 and Glu-38; that span reads GAGGRM. Arg-39 contributes to the NADP(+) binding site. Residues 102–104 and 126–129 each bind NAD(+); these read GTT and AANF. Residue His-159 is the Proton donor/acceptor of the active site. Residue His-160 coordinates (S)-2,3,4,5-tetrahydrodipicolinate. The active-site Proton donor is Lys-163. 169 to 170 serves as a coordination point for (S)-2,3,4,5-tetrahydrodipicolinate; that stretch reads GT.

It belongs to the DapB family. Homotetramer.

It localises to the cytoplasm. The enzyme catalyses (S)-2,3,4,5-tetrahydrodipicolinate + NAD(+) + H2O = (2S,4S)-4-hydroxy-2,3,4,5-tetrahydrodipicolinate + NADH + H(+). It catalyses the reaction (S)-2,3,4,5-tetrahydrodipicolinate + NADP(+) + H2O = (2S,4S)-4-hydroxy-2,3,4,5-tetrahydrodipicolinate + NADPH + H(+). It functions in the pathway amino-acid biosynthesis; L-lysine biosynthesis via DAP pathway; (S)-tetrahydrodipicolinate from L-aspartate: step 4/4. In terms of biological role, catalyzes the conversion of 4-hydroxy-tetrahydrodipicolinate (HTPA) to tetrahydrodipicolinate. This chain is 4-hydroxy-tetrahydrodipicolinate reductase, found in Salmonella gallinarum (strain 287/91 / NCTC 13346).